Here is a 218-residue protein sequence, read N- to C-terminus: Ras-related protein Rab-4A (218 aa).

G23, T24, G25, K26, S27, C28, S42, H44, and T45 together coordinate GTP. S27 lines the Mg(2+) pocket. A Switch 1 motif is present at residues 44–49; it reads HTIGVE. Mg(2+) is bound by residues T45 and D68. The short motif at 70–79 is the Switch 2 element; that stretch reads AGQERFRSVT. G71 serves as a coordination point for GTP. Q72 is modified (5-glutamyl serotonin). GTP is bound by residues N126, K127, D129, A157, and L158. A Phosphoserine modification is found at S190. Residue S204 is modified to Phosphoserine; by CDK1. Residues C216 and C218 are each lipidated (S-geranylgeranyl cysteine). C218 is subject to Cysteine methyl ester.

The protein belongs to the small GTPase superfamily. Rab family. As to quaternary structure, interacts with RAB11FIP1, RABEP1, ZFYVE20 and RUFY1. Interacts with SGSM1, SGSM2 and SGSM3. Interacts (membrane-bound form) with NDRG1; the interaction involves NDRG1 in vesicular recycling of E-cadherin. Interacts (in GTP-bound form) with GRIPAP1. Interacts with RABEP1 and RBSN. Does not interact with HPS4. Mg(2+) serves as cofactor. Post-translationally, serotonylation of Gln-72 by TGM2 during activation and aggregation of platelets leads to constitutive activation of GTPase activity. Phosphorylated by CDK1 kinase during mitosis.

It is found in the membrane. The protein localises to the cytoplasm. Its subcellular location is the early endosome membrane. The protein resides in the recycling endosome membrane. It carries out the reaction GTP + H2O = GDP + phosphate + H(+). Regulated by guanine nucleotide exchange factors (GEFs) which promote the exchange of bound GDP for free GTP. Regulated by GTPase activating proteins (GAPs) which increase the GTP hydrolysis activity. Inhibited by GDP dissociation inhibitors (GDIs). The small GTPases Rab are key regulators of intracellular membrane trafficking, from the formation of transport vesicles to their fusion with membranes. Rabs cycle between an inactive GDP-bound form and an active GTP-bound form that is able to recruit to membranes different sets of downstream effectors directly responsible for vesicle formation, movement, tethering and fusion. RAB4A is involved in protein transport. Also plays a role in vesicular traffic. Mediates VEGFR2 endosomal trafficking to enhance VEGFR2 signaling. Acts as a regulator of platelet alpha-granule release during activation and aggregation of platelets. This chain is Ras-related protein Rab-4A (RAB4A), found in Bos taurus (Bovine).